The primary structure comprises 344 residues: RNA-binding protein squid (344 aa).

Positions 1 to 55 (MAENKQVDTEINGEDFTKDVTADGPGSENGDAGAAGSTNGSSDNQSAASGQRDDD) are disordered. A compositionally biased stretch (polar residues) spans 36 to 49 (GSTNGSSDNQSAAS). RRM domains lie at 56–138 (RKLF…HGKI) and 136–213 (GKIF…RATP). S148 is subject to Phosphoserine. Disordered regions lie at residues 214-238 (KPEN…RGGY) and 301-344 (GGGG…HQPY). The M9-like motif stretch occupies residues 215–254 (PENQMMGGMRGGPRGGMRGGRGGYGGRGGYNNQWDGQGSY). Gly residues-rich tracts occupy residues 222–238 (GMRG…RGGY) and 301–337 (GGGG…GGGR). Residues 300 to 338 (GGGGGGNMGGGRGGPRGGGGPKGGGGFNGGKQRGGGGRQ) form an M9 motif region.

Interacts with bru1/Bruno; the interaction is direct but weak, and may play a role in regulation of grk mRNA localization and translation. As to quaternary structure, interacts (probably via M9 and M9-like motifs) with Tnpo/Transportin; the interaction is direct and is involved in nuclear localization. Interacts with fs(1)K10 (via N-terminus); may be involved in localization of sqd in the oocyte during oogenesis. In terms of assembly, interacts (via C-terminus) with Hrb27C; the interaction is RNA dependent. Does not interact with Tnpo/Transportin. Interacts with fs(1)K10 (via N-terminus); may be involved in localization of sqd in the oocyte during oogenesis. Interacts (probably via M9-like motif) with Tnpo/Transportin; the interaction is direct and is involved in nuclear localization. Interacts with fs(1)K10 (via N-terminus); may be involved in localization of sqd in the oocyte during oogenesis.

The protein localises to the nucleus. Its subcellular location is the cytoplasm. Component of ribonucleosomes. Could be needed to organize a concentration gradient of a dorsalizing morphogen (Dm) originating in the germinal vesicle. At least one of the isoforms is essential in somatic tissues. Interacts with grk mRNA (via 3' UTR) and involved in its localization to the dorsal anterior region of the oocyte during dorsal-ventral axis determination; may function as a ribonuclear protein complex together with otu and Hrb27C. Required for polytene chromosome dispersal in nurse cells during oogenesis; nuclear isoforms play a greater role in this than cytoplasmic isoforms. In terms of biological role, required nonredundantly with isoform A/sqdA for dorsoventral pattern determination during oogenesis. May be important in somatic tissues. Functionally, required nonredundantly with isoform B/SqdS for dorsoventral pattern determination during oogenesis. Its function is as follows. May lack a role in dorsoventral pattern determination during oogenesis. May be important in somatic tissues. The protein is RNA-binding protein squid of Drosophila melanogaster (Fruit fly).